The primary structure comprises 368 residues: MAPSTLTALAQEKTLNSKFVRDEDERPKIAYNKFSDEIPVISLAGIDDDSVDKRSQICRKIVEACEDWGIFQVVDHGIDIDLISEMTRLARQFFALPAEEKLRFDMTGGKKGGFIVSSHLQGEAVQDWREIVTYFSYPIQARDYSRWPDKPEGWRSITEMYSDELMALACKLLEVLSEAMGLEKEGLTKACVDMDQKVIVNYYPKCPQPNLTLGLKRHTDPGTITLLLQDQVGGLQATRDGGKTWITVQPVEGAFVVNLGDHGHYLSNGRFKNADHQAVVNSNSSRMSIATFQNPAPNATVYPLKIREGEKAVMEEPITFAEMYKRKMSRDIEMATLKKLAKEKVLQDQEVEKAKLQMTPKSADEIFA.

The Fe2OG dioxygenase domain maps to 191-295; sequence CVDMDQKVIV…RMSIATFQNP (105 aa). Positions 218, 220, and 276 each coordinate Fe cation. Arg286 provides a ligand contact to 2-oxoglutarate.

Belongs to the iron/ascorbate-dependent oxidoreductase family. It depends on Fe(2+) as a cofactor. L-ascorbate serves as cofactor.

It carries out the reaction a (2S)-flavan-4-one + 2-oxoglutarate + O2 = a (2R,3R)-dihydroflavonol + succinate + CO2. It functions in the pathway secondary metabolite biosynthesis; flavonoid biosynthesis. In terms of biological role, involved in the conversion of (2S)-naringenin to (+)-(2R/3R)-dihydrokaempferol. The sequence is that of Flavanone 3-dioxygenase (FHT) from Petroselinum crispum (Parsley).